Consider the following 898-residue polypeptide: DNA damage-induced apoptosis suppressor protein (898 aa).

Disordered stretches follow at residues 191-210, 643-670, and 710-749; these read CGSQ…DSDL, SINT…HEGS, and YPIN…FEES. Composition is skewed to polar residues over residues 643–664 and 710–725; these read SINT…PSSS and YPIN…KPSL. The span at 726-741 shows a compositional bias: low complexity; that stretch reads QSISPSRYSRPRSQSD.

In terms of tissue distribution, highly expressed in the testis, spleen and heart. Expressed at high levels in the primary spermatocytes and to a lesser extent in the round spermatids. Also found in the bone marrow, brain, lung, kidney and liver.

It localises to the cytoplasm. Its subcellular location is the nucleus. In terms of biological role, may be an anti-apoptotic protein involved in DNA repair or cell survival. The sequence is that of DNA damage-induced apoptosis suppressor protein (Ddias) from Mus musculus (Mouse).